The chain runs to 905 residues: Protein translocase subunit SecA (905 aa).

ATP is bound by residues Gln-87, 105 to 109 (GEGKT), and Asp-512. The tract at residues 565–584 (RRIDNQLRGRSGRQGDPGSS) is disordered. The Zn(2+) site is built by Cys-886, Cys-888, Cys-897, and His-898.

The protein belongs to the SecA family. In terms of assembly, monomer and homodimer. Part of the essential Sec protein translocation apparatus which comprises SecA, SecYEG and auxiliary proteins SecDF-YajC and YidC. Zn(2+) serves as cofactor.

Its subcellular location is the cell inner membrane. It localises to the cytoplasm. It carries out the reaction ATP + H2O + cellular proteinSide 1 = ADP + phosphate + cellular proteinSide 2.. Functionally, part of the Sec protein translocase complex. Interacts with the SecYEG preprotein conducting channel. Has a central role in coupling the hydrolysis of ATP to the transfer of proteins into and across the cell membrane, serving both as a receptor for the preprotein-SecB complex and as an ATP-driven molecular motor driving the stepwise translocation of polypeptide chains across the membrane. The chain is Protein translocase subunit SecA from Haemophilus ducreyi (strain 35000HP / ATCC 700724).